The primary structure comprises 851 residues: UPF0508 protein CAGL0M08074g (851 aa).

The protein belongs to the UPF0508 family.

In Candida glabrata (strain ATCC 2001 / BCRC 20586 / JCM 3761 / NBRC 0622 / NRRL Y-65 / CBS 138) (Yeast), this protein is UPF0508 protein CAGL0M08074g.